The chain runs to 316 residues: Probable cell division protein WhiA (316 aa).

Positions 280–313 (SLKELGEMLEPPVGKSGVNHRLRKIEKIAEELRT) form a DNA-binding region, H-T-H motif.

This sequence belongs to the WhiA family.

Functionally, involved in cell division and chromosome segregation. This Clostridium perfringens (strain ATCC 13124 / DSM 756 / JCM 1290 / NCIMB 6125 / NCTC 8237 / Type A) protein is Probable cell division protein WhiA.